The following is a 151-amino-acid chain: Protein archease-like (151 aa).

Aspartate 20, aspartate 150, and isoleucine 151 together coordinate Ca(2+).

It belongs to the archease family.

Component of the tRNA-splicing ligase complex required to facilitate the enzymatic turnover of catalytic subunit RtcB. The sequence is that of Protein archease-like from Dictyostelium discoideum (Social amoeba).